Reading from the N-terminus, the 231-residue chain is Probable glutathione S-transferase GSTU1 (231 aa).

In terms of domain architecture, GST N-terminal spans 5-84 (KELVLLDFWV…YLDDAFPGTP (80 aa)). Glutathione contacts are provided by residues Ser-15, Lys-42, Ile-56, and 68 to 69 (ES). The region spanning 97–220 (AAYARATARF…LPSPEKVYDF (124 aa)) is the GST C-terminal domain.

This sequence belongs to the GST superfamily. Tau family.

It catalyses the reaction RX + glutathione = an S-substituted glutathione + a halide anion + H(+). In terms of biological role, conjugation of reduced glutathione to a wide number of exogenous and endogenous hydrophobic electrophiles. In Oryza sativa subsp. indica (Rice), this protein is Probable glutathione S-transferase GSTU1 (GSTU1).